The sequence spans 459 residues: Ammonium transporter Rh type B (459 aa).

The Cytoplasmic portion of the chain corresponds to 1-10; it reads MAESTNLRLR. A helical transmembrane segment spans residues 11 to 31; sequence LPLICIILEVILIILFGVLVE. Residues 32–58 lie on the Extracellular side of the membrane; the sequence is YNDDTDAKKWNKNNSTDPATNEFYYRY. N-linked (GlcNAc...) asparagine glycosylation is present at asparagine 45. Residues 59–79 traverse the membrane as a helical segment; it reads PSFQDVHVMIFVGFGFLMTFL. Residues 80–87 are Cytoplasmic-facing; the sequence is QRYGFSSM. The chain crosses the membrane as a helical span at residues 88–108; sequence GFNFLIAAFSLQWATLMQGFF. Residues 109–121 lie on the Extracellular side of the membrane; sequence HGMHHGKIHVGVT. The chain crosses the membrane as a helical span at residues 122-142; sequence SMINADFCTGAVLISFGAVLG. The Cytoplasmic segment spans residues 143 to 149; sequence KTSPVQL. The chain crosses the membrane as a helical span at residues 150-170; it reads LVMAILEVTLFAVNEYILLSI. Over 171–176 the chain is Extracellular; that stretch reads LGANDA. A helical transmembrane segment spans residues 177–197; sequence GGSMTIHTFGAYFGLMVTRIL. The Cytoplasmic portion of the chain corresponds to 198 to 216; the sequence is HRPNLDKSKHKNSSVYHSD. A helical transmembrane segment spans residues 217–237; sequence LFAMIGTIFLWMFWPSFNSAI. At 238–248 the chain is on the extracellular side; that stretch reads TQYGDPQHRTA. Residues 249–269 traverse the membrane as a helical segment; sequence ANTYYSLAACTLATFGFSSLV. Over 270–274 the chain is Cytoplasmic; sequence NPEGK. The helical transmembrane segment at 275–295 threads the bilayer; sequence LDMVHIQNAALAGGVAVGTAG. Position 296 (glutamate 296) is a topological domain, extracellular. Residues 297-317 form a helical membrane-spanning segment; it reads MMLTPFGSMIVGFLAGTISVL. The Cytoplasmic portion of the chain corresponds to 318 to 340; that stretch reads GYKYLTPFMESKLKIQDTCGIHN. A helical membrane pass occupies residues 341–361; it reads LHGMPGILGAIVGAVTAALAS. Topologically, residues 362-392 are extracellular; the sequence is RDVYGNGLDKVFLEAADNSQWSAQTKGGFQA. Residues 393–413 form a helical membrane-spanning segment; it reads ISLAVTLGIALIGGLITGFLL. The Cytoplasmic portion of the chain corresponds to 414–459; sequence KLPIYGTPPDTQCFEDAVYWEVPGEEEDHHELNEVSTQNEVEKLNS. A disordered region spans residues 440 to 459; sequence EDHHELNEVSTQNEVEKLNS.

It belongs to the ammonium transporter (TC 2.A.49) family. Rh subfamily.

Its subcellular location is the basolateral cell membrane. The protein resides in the cytoplasmic vesicle membrane. Functions as an ammonia transporter. May play a role in the elimination of ammonia in the gill. The sequence is that of Ammonium transporter Rh type B (rhbg) from Danio rerio (Zebrafish).